A 210-amino-acid chain; its full sequence is Scoloptoxin SSD976 (210 aa).

Positions 1-23 are cleaved as a signal peptide; that stretch reads MNILLSSTLFVLLMFQIIGSGMG.

Post-translationally, contains 3 disulfide bonds. Expressed by the venom gland.

The protein resides in the secreted. Functionally, voltage-gated calcium channel inhibitor. This Scolopendra dehaani (Thai centipede) protein is Scoloptoxin SSD976.